A 223-amino-acid chain; its full sequence is N-terminal Xaa-Pro-Lys N-methyltransferase 1 (223 aa).

S-adenosyl-L-methionine contacts are provided by residues glycine 69, arginine 74, 91–93 (DVT), 119–120 (LQ), and glutamine 135.

This sequence belongs to the methyltransferase superfamily. NTM1 family.

The protein localises to the nucleus. The catalysed reaction is N-terminal L-alanyl-L-prolyl-L-lysyl-[protein] + 3 S-adenosyl-L-methionine = N-terminal N,N,N-trimethyl-L-alanyl-L-prolyl-L-lysyl-[protein] + 3 S-adenosyl-L-homocysteine + 3 H(+). The enzyme catalyses N-terminal L-seryl-L-prolyl-L-lysyl-[protein] + 3 S-adenosyl-L-methionine = N-terminal N,N,N-trimethyl-L-seryl-L-prolyl-L-lysyl-[protein] + 3 S-adenosyl-L-homocysteine + 3 H(+). It carries out the reaction N-terminal L-prolyl-L-prolyl-L-lysyl-[protein] + 2 S-adenosyl-L-methionine = N-terminal N,N-dimethyl-L-prolyl-L-prolyl-L-lysyl-[protein] + 2 S-adenosyl-L-homocysteine + 2 H(+). In terms of biological role, distributive alpha-N-methyltransferase that methylates the N-terminus of target proteins containing the N-terminal motif [Ala/Gly/Pro/Ser]-Pro-Lys when the initiator Met is cleaved. Specifically catalyzes mono-, di- or tri-methylation of the exposed alpha-amino group of the Ala, Gly or Ser residue in the [Ala/Gly/Ser]-Pro-Lys motif and mono- or di-methylation of Pro in the Pro-Pro-Lys motif. Required during mitosis for normal bipolar spindle formation and chromosome segregation via its action on target proteins. The chain is N-terminal Xaa-Pro-Lys N-methyltransferase 1 (ntmt1) from Danio rerio (Zebrafish).